The following is a 629-amino-acid chain: Ionotropic receptor 75a (629 aa).

At 1–335 (MQLVQLANFV…GDVFLQPFSP (335 aa)) the chain is on the extracellular side. 6 N-linked (GlcNAc...) asparagine glycosylation sites follow: asparagine 61, asparagine 112, asparagine 126, asparagine 144, asparagine 166, and asparagine 232. A helical membrane pass occupies residues 336–356 (LVWYLFGGVLSLIGVLLWITF). The Cytoplasmic portion of the chain corresponds to 357-374 (YMECKRMQKRWRLDYLPS). A helical membrane pass occupies residues 375 to 395 (LLSTFLISFGAACIQSSSLIP). The Extracellular segment spans residues 396 to 402 (RSAGGRL). A helical transmembrane segment spans residues 403 to 423 (IYFALFLISFIMYNYYTSVVV). At 424–592 (SSLLSSPVKS…NFVITVGMEY (169 aa)) the chain is on the cytoplasmic side. A helical membrane pass occupies residues 593–613 (VAPLLLMLICADILVVVILLV). The Extracellular segment spans residues 614–629 (ELAWKRFFTRHLTFHP).

The protein belongs to the glutamate-gated ion channel (TC 1.A.10.1) family. In terms of tissue distribution, expressed in acetic-acid-sensing neurons in the antennal coeloconic 2 (ac2) and antennal coeloconic 3 (ac3) sensilla class of sensory hairs (at protein level).

It localises to the cell membrane. It is found in the cell projection. Its subcellular location is the dendrite. Its function is as follows. Odorant receptor for acetic and propionic acid. Functions as part of an olfactory receptor complex including the ionotropic receptor coreceptor Ir8a. This is Ionotropic receptor 75a from Drosophila melanogaster (Fruit fly).